The sequence spans 292 residues: Thyroxine 5-deiodinase (292 aa).

The Cytoplasmic portion of the chain corresponds to 1–30; that stretch reads VVGEGRGALGGAATMLRSLLLHSLRLCAQT. Residues 31-50 traverse the membrane as a helical; Signal-anchor for type II membrane protein segment; it reads ASCLVLFPRFLGTAFMLWLL. At 51–292 the chain is on the extracellular side; that stretch reads DFLCIRKHLL…QLHGPQPRRV (242 aa). U158 is a catalytic residue. U158 is a non-standard amino acid (selenocysteine).

It belongs to the iodothyronine deiodinase family. Monomer. Homodimer. May undergo minor heretodimerization with DIO1 and DIO2.

It is found in the cell membrane. The protein localises to the endosome membrane. The enzyme catalyses 3,3',5'-triiodo-L-thyronine + iodide + A + H(+) = L-thyroxine + AH2. The catalysed reaction is 3,3'-diiodo-L-thyronine + iodide + A + H(+) = 3,3',5-triiodo-L-thyronine + AH2. It carries out the reaction 3-iodo-L-thyronine + iodide + A + H(+) = 3,5-diiodo-L-thyronine + AH2. It catalyses the reaction L-thyronine + iodide + A + H(+) = 3-iodo-L-thyronine + AH2. The enzyme catalyses 3',5'-diiodo-L-thyronine + iodide + A + H(+) = 3,3',5'-triiodo-L-thyronine + AH2. The catalysed reaction is 3'-iodo-L-thyronine + iodide + A + H(+) = 3,3'-diiodo-L-thyronine + AH2. It carries out the reaction 3,3',5'-triiodothyronamine + iodide + A + H(+) = 3,3',5,5'-tetraiodothyronamine + AH2. It catalyses the reaction 3',5'-diiodothyronamine + iodide + A + H(+) = 3,3',5'-triiodothyronamine + AH2. The enzyme catalyses 3,3'-diiodothyronamine + iodide + A + H(+) = 3,3',5-triiodothyronamine + AH2. The catalysed reaction is 3-iodothyronamine + iodide + A + H(+) = 3,5-diiodothyronamine + AH2. It carries out the reaction 3'-iodothyronamine + iodide + A + H(+) = 3,3'-diiodothyronamine + AH2. It catalyses the reaction thyronamine + iodide + A + H(+) = 3-iodothyronamine + AH2. Functionally, plays a crucial role in the metabolism of thyroid hormones (TH) and has specific roles in TH activation and inactivation by deiodination.Catalyzes the deiodination of L-thyroxine (T4) to 3,3',5'-triiodothyronine (rT3), 3,5,3'-triiodothyronine (T3) to 3,3'-diiodothyronine (3,3'-T2), 3,5-diiodothyronine (3,5-T2) to 3-monoiodothyronine (3-T1), rT3 to 3',5'-diiodothyronine (3',5'-T2) and 3,3'-T2 to 3'-monoiodothyronine (3'-T1) via inner-ring deiodination (IRD). Catalyzes the deiodination of 3-T1 to L-thyronine (T0) via outer-ring deiodination (ORD). Catalyzes the tyrosyl ring deiodinations of 3,3',5,5'-tetraiodothyronamine, 3,3',5'-triiodothyronamine, 3,5,3'-triiodothyronamine, 3,5-diiodothyronamine, 3,3'-diiodothyronamine and 3-iodothyronamine. This is Thyroxine 5-deiodinase (DIO3) from Ovis aries (Sheep).